A 92-amino-acid chain; its full sequence is Protein LSO2 (92 aa).

Composition is skewed to basic and acidic residues over residues 1–10 and 38–72; these read MGKRFSESAA and EASK…ERDA. The tract at residues 1-92 is disordered; sequence MGKRFSESAA…KGGKGKRKMK (92 aa). A coiled-coil region spans residues 17–80; it reads ARKRDQAHAK…DALLTAEEEQ (64 aa).

This sequence belongs to the CCDC124 family. Associates with translationally inactive ribosomes in the nonrotated state. LSO2 bridges the decoding sites of the small with the GTPase activating center (GAC) of the large subunit. This position allows accommodation of the DOM34-dependent ribosome recycling system, which splits LSO2-containing ribosomes.

The protein resides in the nucleus. It localises to the cytoplasm. In terms of biological role, ribosome-binding protein involved in ribosome hibernation by associating with translationally inactive ribosomes. Required for translational recovery after starvation from stationary phase. May facilitate rapid translation reactivation by stabilizing the recycling-competent state of inactive ribosomes. The sequence is that of Protein LSO2 from Saccharomyces cerevisiae (strain ATCC 204508 / S288c) (Baker's yeast).